Here is a 287-residue protein sequence, read N- to C-terminus: Glycine--tRNA ligase alpha subunit (287 aa).

This sequence belongs to the class-II aminoacyl-tRNA synthetase family. As to quaternary structure, tetramer of two alpha and two beta subunits.

The protein resides in the cytoplasm. The catalysed reaction is tRNA(Gly) + glycine + ATP = glycyl-tRNA(Gly) + AMP + diphosphate. The polypeptide is Glycine--tRNA ligase alpha subunit (Campylobacter jejuni subsp. doylei (strain ATCC BAA-1458 / RM4099 / 269.97)).